We begin with the raw amino-acid sequence, 393 residues long: NAD(P)H-quinone oxidoreductase subunit H, chloroplastic (393 aa).

This sequence belongs to the complex I 49 kDa subunit family. NDH is composed of at least 16 different subunits, 5 of which are encoded in the nucleus.

It localises to the plastid. The protein resides in the chloroplast thylakoid membrane. It catalyses the reaction a plastoquinone + NADH + (n+1) H(+)(in) = a plastoquinol + NAD(+) + n H(+)(out). It carries out the reaction a plastoquinone + NADPH + (n+1) H(+)(in) = a plastoquinol + NADP(+) + n H(+)(out). NDH shuttles electrons from NAD(P)H:plastoquinone, via FMN and iron-sulfur (Fe-S) centers, to quinones in the photosynthetic chain and possibly in a chloroplast respiratory chain. The immediate electron acceptor for the enzyme in this species is believed to be plastoquinone. Couples the redox reaction to proton translocation, and thus conserves the redox energy in a proton gradient. The chain is NAD(P)H-quinone oxidoreductase subunit H, chloroplastic from Lobularia maritima (Sweet alyssum).